The sequence spans 595 residues: Anthranilate synthase alpha subunit 1, chloroplastic (595 aa).

The transit peptide at 1-54 (MSSSMNVATMQALTFSRRLLPSVASRYLSSSSVTVTGYSGRSSAYAPSFRSIKC) directs the protein to the chloroplast. Valine 55 carries the N-acetylvaline modification. L-tryptophan is bound by residues serine 115 and 356–358 (PYM). 391-392 (GT) provides a ligand contact to chorismate. Glutamate 418 serves as a coordination point for Mg(2+). Chorismate-binding positions include tyrosine 506, arginine 526, 558-560 (GAG), and glycine 560. Residue glutamate 573 participates in Mg(2+) binding.

Belongs to the anthranilate synthase component I family. As to quaternary structure, heterotetramer consisting of two non-identical subunits: a beta subunit and a large alpha subunit. Mg(2+) serves as cofactor. In terms of tissue distribution, expressed in the central cylinder of mature primary root zones, including pericycle and early lateral root primordia, and vasculature of cotyledons.

Its subcellular location is the plastid. It localises to the chloroplast. The catalysed reaction is chorismate + L-glutamine = anthranilate + pyruvate + L-glutamate + H(+). It participates in amino-acid biosynthesis; L-tryptophan biosynthesis; L-tryptophan from chorismate: step 1/5. Its activity is regulated as follows. Feedback inhibition by tryptophan. Its function is as follows. Part of a heterotetrameric complex that catalyzes the two-step biosynthesis of anthranilate, an intermediate in the biosynthesis of L-tryptophan. In the first step, the glutamine-binding beta subunit of anthranilate synthase (AS) provides the glutamine amidotransferase activity which generates ammonia as a substrate that, along with chorismate, is used in the second step, catalyzed by the large alpha subunit of AS to produce anthranilate. Plays an important regulatory role in auxin production via the tryptophan-dependent biosynthetic pathway. The sequence is that of Anthranilate synthase alpha subunit 1, chloroplastic (ASA1) from Arabidopsis thaliana (Mouse-ear cress).